A 365-amino-acid polypeptide reads, in one-letter code: Putrescine carbamoyltransferase (365 aa).

Carbamoyl phosphate contacts are provided by residues 54 to 58 (STRTR), arginine 105, and histidine 132. 277-280 (HCLP) lines the putrescine pocket.

Belongs to the aspartate/ornithine carbamoyltransferase superfamily. PTCase family. In terms of assembly, homotrimer.

It is found in the cytoplasm. It catalyses the reaction carbamoyl phosphate + putrescine = N-carbamoylputrescine + phosphate + H(+). It participates in amine and polyamine biosynthesis; putrescine biosynthesis via agmatine pathway; putrescine from N-carbamoylputrescine (transferase route): step 1/1. In terms of biological role, catalyzes the phosphorolysis of N-carbamoylputrescine to form carbamoyl phosphate and putrescine. Is involved in the degradation pathway of the polyamine agmatine. This Mycoplasma capricolum subsp. capricolum (strain California kid / ATCC 27343 / NCTC 10154) protein is Putrescine carbamoyltransferase.